The primary structure comprises 412 residues: Aurora kinase (412 aa).

Residues 94 to 119 form a disordered region; it reads NEKVRPSKSSHIPVKSPIRKKGHSPA. The Protein kinase domain occupies 148–401; it reads FEIGKVLGKG…LAEVMNHPWI (254 aa). ATP contacts are provided by residues 154 to 162 and K177; that span reads LGKGKLGKV. Catalysis depends on D271, which acts as the Proton acceptor.

It belongs to the protein kinase superfamily. Ser/Thr protein kinase family. Aurora subfamily.

The protein localises to the nucleus. It is found in the cytoplasm. The protein resides in the cytoskeleton. Its subcellular location is the spindle. It localises to the chromosome. The protein localises to the centromere. It is found in the kinetochore. It catalyses the reaction L-seryl-[protein] + ATP = O-phospho-L-seryl-[protein] + ADP + H(+). The catalysed reaction is L-threonyl-[protein] + ATP = O-phospho-L-threonyl-[protein] + ADP + H(+). In terms of biological role, component of the chromosomal passenger complex (CPC), a complex that acts as a key regulator of chromosome segregation and cytokinesis. Has a role in error-correction of aberrent kinetochore-microtubule attachments to ensure that sister kinetochores become bioriented and connect to opposite poles by promoting spindle assembly checkpoint signaling. In Debaryomyces hansenii (strain ATCC 36239 / CBS 767 / BCRC 21394 / JCM 1990 / NBRC 0083 / IGC 2968) (Yeast), this protein is Aurora kinase (IPL1).